A 128-amino-acid chain; its full sequence is Large ribosomal subunit protein bL17 (128 aa).

Belongs to the bacterial ribosomal protein bL17 family. As to quaternary structure, part of the 50S ribosomal subunit. Contacts protein L32.

In Erwinia tasmaniensis (strain DSM 17950 / CFBP 7177 / CIP 109463 / NCPPB 4357 / Et1/99), this protein is Large ribosomal subunit protein bL17.